Here is a 946-residue protein sequence, read N- to C-terminus: Protein translocase subunit SecA (946 aa).

Residues Q87, 105–109 (GEGKT), and D524 contribute to the ATP site. The interval 904–933 (PAQTTDKADRDPNKPETWGKVGRNEDCPCG) is disordered. Positions 930, 932, 941, and 942 each coordinate Zn(2+).

Belongs to the SecA family. In terms of assembly, monomer and homodimer. Part of the essential Sec protein translocation apparatus which comprises SecA, SecYEG and auxiliary proteins SecDF-YajC and YidC. It depends on Zn(2+) as a cofactor.

Its subcellular location is the cell inner membrane. It is found in the cytoplasm. The catalysed reaction is ATP + H2O + cellular proteinSide 1 = ADP + phosphate + cellular proteinSide 2.. Functionally, part of the Sec protein translocase complex. Interacts with the SecYEG preprotein conducting channel. Has a central role in coupling the hydrolysis of ATP to the transfer of proteins into and across the cell membrane, serving both as a receptor for the preprotein-SecB complex and as an ATP-driven molecular motor driving the stepwise translocation of polypeptide chains across the membrane. This chain is Protein translocase subunit SecA, found in Rhodopseudomonas palustris (strain TIE-1).